The primary structure comprises 439 residues: Protein CNPPD1 (439 aa).

The helical transmembrane segment at 231–251 (CLLGVVYLTGFAAVFTSIAVV) threads the bilayer. Residues 283–302 (ALAPEQPQPKLPDVSPPSST) form a disordered region.

The protein belongs to the CNPPD1 family.

It is found in the membrane. This Gallus gallus (Chicken) protein is Protein CNPPD1 (CNPPD1).